Consider the following 216-residue polypeptide: Transmembrane emp24 domain-containing protein p24delta5 (216 aa).

The signal sequence occupies residues 1–27 (MAINRIAHGSLFLTVVLFFLTVNYGEA). The Lumenal segment spans residues 28–183 (IWLTIPTTGG…REVSETTNSR (156 aa)). A GOLD domain is found at 38-151 (TKCVSEEIQS…IEGVELQLRR (114 aa)). The N-linked (GlcNAc...) asparagine glycan is linked to asparagine 86. Residues 137–159 (AKKEKIEGVELQLRRLEGLVLSI) are a coiled coil. Arginine 169 and arginine 174 each carry omega-N-methylated arginine. The chain crosses the membrane as a helical span at residues 184–204 (VAWFSIMSLGVCVVVVGSQIL). Topologically, residues 205–216 (YLKRYFHKKKLI) are cytoplasmic. The COPII vesicle coat-binding motif lies at 209 to 210 (YF). Residues 209–216 (YFHKKKLI) carry the COPI vesicle coat-binding motif.

This sequence belongs to the EMP24/GP25L family. As to quaternary structure, probably oligomerizes with other members of the EMP24/GP25L family. Associates with the COPI vesicle coat (coatomer). Associates with the COPII vesicle coat (coatomer). Interacts with p24beta2.

It localises to the endoplasmic reticulum membrane. Its function is as follows. Involved in vesicular protein trafficking. Mainly functions in the early secretory pathway. Thought to act as cargo receptor at the lumenal side for incorporation of secretory cargo molecules into transport vesicles and to be involved in vesicle coat formation at the cytoplasmic side. Interacts with p24beta2 at endoplasmic reticulum export sites for endoplasmic reticulum exit and coupled transport to the Golgi apparatus. Once in the Golgi, interacts very efficiently with the COPI machinery for retrograde transport back to the endoplasmic reticulum. In Arabidopsis thaliana (Mouse-ear cress), this protein is Transmembrane emp24 domain-containing protein p24delta5.